Here is a 2486-residue protein sequence, read N- to C-terminus: Nonribosomal peptide synthetase nanA (2486 aa).

Positions 231–637 (FSARQPLSPA…GRRGTQVKLR (407 aa)) are adenylation 1. One can recognise a Carrier 1 domain in the interval 786–860 (TDIELKVHAL…DLARSAKETS (75 aa)). O-(pantetheine 4'-phosphoryl)serine is present on serine 820. A condensation 1 region spans residues 902–1314 (EDAYPCTPLQ…LKSVPRVSSQ (413 aa)). The adenylation 2 stretch occupies residues 1339 to 1735 (RAQARKTPLA…GRIGDQMKIR (397 aa)). Carrier domains follow at residues 1872 to 1948 (PPST…SSAS) and 2404 to 2480 (SSSE…QTQA). O-(pantetheine 4'-phosphoryl)serine occurs at positions 1909 and 2441. The interval 2404–2480 (SSSETIVEPL…KLARLLQTQA (77 aa)) is condensation 2.

The protein belongs to the NRP synthetase family.

The protein operates within secondary metabolite biosynthesis. Functionally, nonribosomal peptide synthetase; part of the gene cluster that mediates the biosynthesis of the benzazepine alkaloid nanangelenin A which contains an unprecedented 3,4-dihydro-1-benzazepine-2,5-dione-N-prenyl-N-acetoxy-anthranilamide scaffold. The first step of nanangelenin biosynthesis is catalyzed by the indoleamine 2,3-dioxygenase nanC which produces N-formyl-kynurenine through the catabolism of tryptophan. The two-module NRPS nanA then utilizes anthranilate (Ant) and L-kynurenine (L-Kyn) to assemble the dipeptide product nanangelenin B. The first adenylation domain of nanA (A1) loads anthranilate onto the T1 domain, while A2 loads kynurenine, generated through spontaneous nonenzymatic deformylation of the nanC-supplied N-formyl-kynurenine. The peptide bond formation between the tethered amino acids is catalyzed by the first condensation domain (C1) between anthranilate's carbonyl carbon and kynurenine's aliphatic primary amine. The second C domain (C2) catalyzes the final cyclization event between the aromatic amine of kynurenine and the tethered carbonyl carbon, yielding nanangelenin B. The terminal T3 domain enhances the catalytic efficiency of C2, suggesting the T2-tethered Ant-L-Kyn is transferred to T3 prior to cyclization by C2. Once released from nanA, nanangelenin B is then prenylated by the prenyltransferase nanD to form nanangelenin C. Nanangelenin C is then N-hydroxylated by the FAD-dependent monooxygenase nanF and further acetylated by the acetyltransferase nanB to yield nanangelenin F. Finally, the N-methyltransferase nanE methylates the amide nitrogen of 1-benzazepine to convert nanangelenin F into nanangelenin A. NanE is also able to methylate most of the intermediates of the pathway such as nanangelenin B and nanangelenin C to produce nanangelenin D and nanangelenin E, respectively. The protein is Nonribosomal peptide synthetase nanA of Aspergillus nanangensis.